Reading from the N-terminus, the 443-residue chain is Tol-Pal system protein TolB (443 aa).

Residues 1–33 (MKIGIINTKIRTVFSAFACMIAASLVCTMPARA) form the signal peptide.

The protein belongs to the TolB family. The Tol-Pal system is composed of five core proteins: the inner membrane proteins TolA, TolQ and TolR, the periplasmic protein TolB and the outer membrane protein Pal. They form a network linking the inner and outer membranes and the peptidoglycan layer.

Its subcellular location is the periplasm. In terms of biological role, part of the Tol-Pal system, which plays a role in outer membrane invagination during cell division and is important for maintaining outer membrane integrity. This is Tol-Pal system protein TolB from Brucella abortus (strain S19).